Here is a 352-residue protein sequence, read N- to C-terminus: Anthranilate phosphoribosyltransferase (352 aa).

5-phospho-alpha-D-ribose 1-diphosphate is bound by residues G91, G94–D95, T99, N101–T104, K119–S127, and S131. G91 contributes to the anthranilate binding site. S103 is a binding site for Mg(2+). Residue N122 participates in anthranilate binding. R177 is an anthranilate binding site. Mg(2+) is bound by residues D235 and E236.

This sequence belongs to the anthranilate phosphoribosyltransferase family. Homodimer. Mg(2+) is required as a cofactor.

The enzyme catalyses N-(5-phospho-beta-D-ribosyl)anthranilate + diphosphate = 5-phospho-alpha-D-ribose 1-diphosphate + anthranilate. The protein operates within amino-acid biosynthesis; L-tryptophan biosynthesis; L-tryptophan from chorismate: step 2/5. Catalyzes the transfer of the phosphoribosyl group of 5-phosphorylribose-1-pyrophosphate (PRPP) to anthranilate to yield N-(5'-phosphoribosyl)-anthranilate (PRA). The protein is Anthranilate phosphoribosyltransferase of Arthrobacter sp. (strain FB24).